A 236-amino-acid chain; its full sequence is 5'-methylthioadenosine/S-adenosylhomocysteine nucleosidase (236 aa).

Glutamate 12 (proton acceptor) is an active-site residue. Substrate contacts are provided by residues glycine 78, isoleucine 153, and 174-175; that span reads ME. The active-site Proton donor is aspartate 198.

The protein belongs to the PNP/UDP phosphorylase family. MtnN subfamily.

The enzyme catalyses S-adenosyl-L-homocysteine + H2O = S-(5-deoxy-D-ribos-5-yl)-L-homocysteine + adenine. The catalysed reaction is S-methyl-5'-thioadenosine + H2O = 5-(methylsulfanyl)-D-ribose + adenine. It carries out the reaction 5'-deoxyadenosine + H2O = 5-deoxy-D-ribose + adenine. It functions in the pathway amino-acid biosynthesis; L-methionine biosynthesis via salvage pathway; S-methyl-5-thio-alpha-D-ribose 1-phosphate from S-methyl-5'-thioadenosine (hydrolase route): step 1/2. Functionally, catalyzes the irreversible cleavage of the glycosidic bond in both 5'-methylthioadenosine (MTA) and S-adenosylhomocysteine (SAH/AdoHcy) to adenine and the corresponding thioribose, 5'-methylthioribose and S-ribosylhomocysteine, respectively. Also cleaves 5'-deoxyadenosine, a toxic by-product of radical S-adenosylmethionine (SAM) enzymes, into 5-deoxyribose and adenine. The polypeptide is 5'-methylthioadenosine/S-adenosylhomocysteine nucleosidase (Shewanella baltica (strain OS223)).